A 451-amino-acid polypeptide reads, in one-letter code: Tubulin gamma-1 chain (451 aa).

Serine 131 carries the post-translational modification Phosphoserine; by BRSK1. 142–148 (AGGTGSG) contributes to the GTP binding site.

It belongs to the tubulin family. Component of the gamma-tubulin ring complex (gTuRC) consisting of TUBGCP2, TUBGCP3, TUBGCP4, TUBGCP5 and TUBGCP6 and gamma-tubulin TUBG1 or TUBG2. TUBGCP2, TUBGCP3, TUBGCP4, TUBGCP5 and TUBGCP6 assemble in a 5:5:2:1:1 stoichiometry; each is associated with a gamma-tubulin, thereby arranging 14 gamma-tubulins in a helical manner. Gamma-tubulin at the first position is blocked by TUBGCP3 at the last position, allowing 13 protafilaments to grow into a microtubule. The gTuRC (via TUBGCP3 and TUBGCP6) interacts with ACTB and MZT1; the interactions form a luminal bridge that stabilizes the initial structure during complex assembly. The gTuRC (via TUBGCP2) interacts with MZT2A/MZT2B and CDK5RAP2 (via CM1 motif); the interactions play a role in gTuRC activation. Interacts with alpha-beta tubulin heterodimers; the interaction allows microtubules to nucleate from the gTuRC. Interacts with B9D2. Interacts with CDK5RAP2; the interaction is leading to centrosomal localization of TUBG1 and CDK5RAP2. Interacts with CIMAP3. Interacts with SAS6 and NUP62 at the centrosome. Interacts with EML3 (phosphorylated at 'Thr-881') and HAUS8. Interacts with DNM2; this interaction may participate in centrosome cohesion. Interacts with CCDC66. Phosphorylation at Ser-131 by BRSK1 regulates centrosome duplication, possibly by mediating relocation of gamma-tubulin and its associated proteins from the cytoplasm to the centrosome.

The protein resides in the cytoplasm. Its subcellular location is the cytoskeleton. It is found in the microtubule organizing center. It localises to the centrosome. The protein localises to the spindle. Functionally, tubulin is the major constituent of microtubules, protein filaments consisting of alpha- and beta-tubulin heterodimers. Gamma-tubulin is a key component of the gamma-tubulin ring complex (gTuRC) which mediates microtubule nucleation. The gTuRC regulates the minus-end nucleation of alpha-beta tubulin heterodimers that grow into microtubule protafilaments, a critical step in centrosome duplication and spindle formation. The polypeptide is Tubulin gamma-1 chain (Bos taurus (Bovine)).